A 1239-amino-acid chain; its full sequence is Potassium channel subfamily T member 1 (1239 aa).

The disordered stretch occupies residues 1 to 45 (MARAKLPRSPSEGKAGPGDTPAGSAAPEEPHGLSPLLPTRGGGSV). Residues 1–93 (MARAKLPRSP…LFFIKNQRSS (93 aa)) are Cytoplasmic-facing. A helical transmembrane segment spans residues 94 to 126 (LRIRLFNFSLKLLTCLLYIVRVLLDNPDQGIGC). At 127 to 153 (WGCTKYNYTFNGSSSEFHWAPILWVER) the chain is on the extracellular side. Asn133 and Asn137 each carry an N-linked (GlcNAc...) asparagine glycan. The chain crosses the membrane as a helical span at residues 154–178 (KMALWVIQVIVATISFLETMLLIYL). Residues 179-192 (SYKGNIWEQIFHVS) lie on the Cytoplasmic side of the membrane. A helical membrane pass occupies residues 193–208 (FVLEMINTLPFIITVF). Topologically, residues 209-215 (WPPLRNL) are extracellular. A helical membrane pass occupies residues 216–233 (FIPVFLNCWLAKHALENM). Residues 234–246 (INDFHRAILRTQS) lie on the Cytoplasmic side of the membrane. The helical transmembrane segment at 247–274 (AMFNQVLILFCTLLCLVFTGTCGIQHLE) threads the bilayer. At 275–281 (RAGGNLN) the chain is on the extracellular side. Residues 282–302 (LLTSFYFCIVTFSTVGFGDVT) constitute an intramembrane region (pore-forming). Residues Val296 and Gly297 each contribute to the K(+) site. The Extracellular portion of the chain corresponds to 303-304 (PK). Residues 305-338 (IWPSQLLVVILICVTLVVLPLQFEELVYLWMERQ) traverse the membrane as a helical segment. Residues 339–1239 (KSGGNYSRHR…NPETRDETQL (901 aa)) lie on the Cytoplasmic side of the membrane. Positions 352-488 (EKHVVLCVSS…FHVKFADHVV (137 aa)) constitute an RCK N-terminal 1 domain. Na(+) is bound by residues Leu513, His516, Ser538, and Asn540. Residues 658–689 (QNTDCRPSQGGSGGGGGKLTLPTENGSGSRRP) are disordered. 2 residues coordinate Zn(2+): Cys758 and Cys759. K(+) is bound by residues Arg761 and Lys764. Na(+) is bound by residues Arg761 and Lys764. Zn(2+)-binding residues include Cys766 and His768. Residues Asn769, Tyr771, Tyr777, and Gly778 each contribute to the K(+) site. A Na(+)-binding site is contributed by Tyr771. A Na(+)-binding site is contributed by Phe779. The region spanning 781-921 (NKLIIVSAET…QFRAKDSYSL (141 aa)) is the RCK N-terminal 2 domain. Residues Ser787, Leu818, Asp820, Gly842, and Asp865 each contribute to the K(+) site. Disordered stretches follow at residues 1053 to 1081 (REAKGPWGTRAASGGGSTHGRHGGSADPV) and 1212 to 1239 (TSSSQSRKSSCSNKLSSCNPETRDETQL). A compositionally biased stretch (low complexity) spans 1213-1230 (SSSQSRKSSCSNKLSSCN).

Belongs to the potassium channel family. Calcium-activated (TC 1.A.1.3) subfamily. KCa4.1/KCNT1 sub-subfamily. In terms of assembly, homotetramer; which constitutes the Na(+)-activated K(+) channel. Interacts with KCNT2; these heterodimer channels differ from the homomers in their unitary conductance, kinetic behavior, subcellular localization, and response to activation of protein kinase C. Interacts (via C-terminus) with FMR1; this interaction alters gating properties of KCNT1. Interacts with CRBN via its cytoplasmic C-terminus. As to quaternary structure, does not interact with KCNT2. In terms of processing, phosphorylated by protein kinase C. Phosphorylation of the C-terminal domain increases channel activity. As to expression, detected in brain and brainstem, in vestibular and oculomotor nuclei, the medial nucleus of the trapezoid in the auditory system, in olfactory bulb, red nucleus, and deep cerebellar nuclei. Detected in thalamus, substantia nigra, and amygdala (at protein level). Highly expressed in the brain and kidney.

The protein localises to the cell membrane. It carries out the reaction K(+)(in) = K(+)(out). With respect to regulation, activated by high intracellular Na(+) level. In addition to activation by Na(+), is cooperatively activated by intracellular Cl(-) levels. Activated upon stimulation of G-protein coupled receptors, such as CHRM1 and GRIA1. Functionally, sodium-activated K(+) channel. Acts as an important mediator of neuronal membrane excitability. Contributes to the delayed outward currents. Regulates neuronal bursting in sensory neurons. Contributes to synaptic development and plasticity. This Rattus norvegicus (Rat) protein is Potassium channel subfamily T member 1 (Kcnt1).